The sequence spans 332 residues: Ribosomal RNA small subunit methyltransferase H (332 aa).

Residues 36–38 (GGY), Asp54, Phe81, Asp102, and Gln109 contribute to the S-adenosyl-L-methionine site. The interval 297-318 (ARSAKLRGAERTEAPAHAAGDL) is disordered.

Belongs to the methyltransferase superfamily. RsmH family.

Its subcellular location is the cytoplasm. It catalyses the reaction cytidine(1402) in 16S rRNA + S-adenosyl-L-methionine = N(4)-methylcytidine(1402) in 16S rRNA + S-adenosyl-L-homocysteine + H(+). Its function is as follows. Specifically methylates the N4 position of cytidine in position 1402 (C1402) of 16S rRNA. In Rhodopseudomonas palustris (strain TIE-1), this protein is Ribosomal RNA small subunit methyltransferase H.